The sequence spans 401 residues: Pectate lyase (401 aa).

The first 20 residues, 1–20 (MATTILPLILFISSLAIASS), serve as a signal peptide directing secretion. Asn-38 carries an N-linked (GlcNAc...) asparagine glycan. Asp-199, Asp-223, and Asp-227 together coordinate Ca(2+). Residue Arg-279 is part of the active site.

It belongs to the polysaccharide lyase 1 family. Ca(2+) serves as cofactor. As to expression, expressed in sites of vascular differentiation and in new primordia on the flank of the shoot meristem.

The enzyme catalyses Eliminative cleavage of (1-&gt;4)-alpha-D-galacturonan to give oligosaccharides with 4-deoxy-alpha-D-galact-4-enuronosyl groups at their non-reducing ends.. It participates in glycan metabolism; pectin degradation; 2-dehydro-3-deoxy-D-gluconate from pectin: step 2/5. In terms of biological role, involved in the degradation of pectin. May assist in the removal and modification of an existing pectin matrix in order to allow the deposition of newly synthesized walls polymers for a specialized function or to create an architecture that is extensible. The sequence is that of Pectate lyase from Zinnia elegans (Garden zinnia).